Here is a 275-residue protein sequence, read N- to C-terminus: T-cell ecto-ADP-ribosyltransferase 1 (275 aa).

An N-terminal signal peptide occupies residues 1–20; sequence MPSNICKFFLTWWLIQQVTG. 2 disulfides stabilise this stretch: cysteine 41–cysteine 243 and cysteine 141–cysteine 193. A glycan (N-linked (GlcNAc...) asparagine) is linked at asparagine 58. The 178-residue stretch at 61 to 238 folds into the TR mART core domain; it reads EKLKVAWEEA…IFLDSPKRKK (178 aa). Residues tyrosine 98, arginine 146, and glutamine 164 each coordinate NAD(+). The active site involves arginine 146. The active site involves serine 167. An NAD(+)-binding site is contributed by serine 202. Residue glutamate 209 is part of the active site. A lipid anchor (GPI-anchor amidated serine) is attached at serine 246. Residues 247–275 constitute a propeptide, removed in mature form; that stretch reads SAGTRESCVSLFLVVLTSLLVQLLCLAEP.

It belongs to the Arg-specific ADP-ribosyltransferase family. Postthymic T-cells.

It is found in the cell membrane. It carries out the reaction L-arginyl-[protein] + NAD(+) = N(omega)-(ADP-D-ribosyl)-L-arginyl-[protein] + nicotinamide + H(+). The catalysed reaction is NAD(+) + H2O = ADP-D-ribose + nicotinamide + H(+). Has NAD(+) glycohydrolase activity and extremely low ADP-ribosyltransferase activity. This Rattus norvegicus (Rat) protein is T-cell ecto-ADP-ribosyltransferase 1 (Art2a).